A 449-amino-acid chain; its full sequence is MTAVIALVGRPNVGKSTFFNRLTRTREALVADLPGLTRDRHYGTAQFEGRQYLVVDTGGFEPEEREGLVAAMAAQTRLAITEADAICFLVDAKEGLSTQDAEIAQELRRGGKPIYLVVNKMDAKGAVSELPEFYRLGLGTPYTISAAHGHGVEPLLEAIFSDLPTSEDDTADAARKGPRIAMLGRPNVGKSTLVNTMLGEKRVLVFDEPGTTRDSIRIPYERQGKPYVMIDTAGMRRRARVGEGLEKLSVLKTLSALREADVVLLVLDARLGIAEQDAHLVGVAVELGRPIVVVVNKWDGMTPEERKAVKQELERRLDFIRYAPVYTISALHGTGVGDLYKSIDQLWIDSRRHFSTAELNRALADVIETHQPPMVGGRRIKLRYCHQGGENPITLVFHGNQLTRLPGTYKRYLESAFRRALHLEAVPLRLVFRQGENPYDPQPKNGRQH.

EngA-type G domains follow at residues 3-167 (AVIA…PTSE) and 178-351 (PRIA…IDSR). GTP contacts are provided by residues 9–16 (GRPNVGKS), 56–60 (DTGGF), 119–122 (NKMD), 184–191 (GRPNVGKS), 231–235 (DTAGM), and 296–299 (NKWD). Positions 352–436 (RHFSTAELNR…PLRLVFRQGE (85 aa)) constitute a KH-like domain.

Belongs to the TRAFAC class TrmE-Era-EngA-EngB-Septin-like GTPase superfamily. EngA (Der) GTPase family. In terms of assembly, associates with the 50S ribosomal subunit.

In terms of biological role, GTPase that plays an essential role in the late steps of ribosome biogenesis. This chain is GTPase Der, found in Acidithiobacillus ferrooxidans (strain ATCC 23270 / DSM 14882 / CIP 104768 / NCIMB 8455) (Ferrobacillus ferrooxidans (strain ATCC 23270)).